Consider the following 243-residue polypeptide: Small ribosomal subunit protein eS4 (243 aa).

Residues 43–105 enclose the S4 RNA-binding domain; it reads IPLLYIVRDY…TGEHYRVLPN (63 aa).

The protein belongs to the eukaryotic ribosomal protein eS4 family. As to quaternary structure, part of the 30S ribosomal subunit.

The chain is Small ribosomal subunit protein eS4 from Pyrococcus furiosus (strain ATCC 43587 / DSM 3638 / JCM 8422 / Vc1).